The primary structure comprises 70 residues: Translational regulator CsrA (70 aa).

Belongs to the CsrA/RsmA family. Homodimer; the beta-strands of each monomer intercalate to form a hydrophobic core, while the alpha-helices form wings that extend away from the core.

The protein resides in the cytoplasm. In terms of biological role, a translational regulator that binds mRNA to regulate translation initiation and/or mRNA stability. Usually binds in the 5'-UTR at or near the Shine-Dalgarno sequence preventing ribosome-binding, thus repressing translation. Its main target seems to be the major flagellin gene, while its function is anatagonized by FliW. The chain is Translational regulator CsrA from Rhodopirellula baltica (strain DSM 10527 / NCIMB 13988 / SH1).